The chain runs to 110 residues: Large ribosomal subunit protein uL22 (110 aa).

It belongs to the universal ribosomal protein uL22 family. Part of the 50S ribosomal subunit.

Its function is as follows. This protein binds specifically to 23S rRNA; its binding is stimulated by other ribosomal proteins, e.g. L4, L17, and L20. It is important during the early stages of 50S assembly. It makes multiple contacts with different domains of the 23S rRNA in the assembled 50S subunit and ribosome. In terms of biological role, the globular domain of the protein is located near the polypeptide exit tunnel on the outside of the subunit, while an extended beta-hairpin is found that lines the wall of the exit tunnel in the center of the 70S ribosome. The chain is Large ribosomal subunit protein uL22 from Aliivibrio fischeri (strain MJ11) (Vibrio fischeri).